The chain runs to 525 residues: NAD(P)H-quinone oxidoreductase chain 4-1 (525 aa).

Transmembrane regions (helical) follow at residues 4–24 (FPWLTTIILLPIVAALFIPII), 37–57 (LAVGLVDFALIVYAFYSGFDL), 89–109 (LIILTGFITTLATMAAWPVTL), 111–131 (PKLFYFLMLLMYGGQIAVFAV), 134–154 (ILLFFLVWELELVPVYLILSI), 167–187 (FILYTAGGSLFILLAGLTLAF), 210–230 (LLLYAGFLIAYGVKLPIFPLH), 241–261 (TAPAHMLLAGILLKMGGYALL), 273–293 (AVFAPVLVILGVVNIIYAAFT), 309–329 (ISHMGFVLIGLASFTDLGMSG), 330–350 (AMLQMISHGLIGASLFFMVGA), 385–405 (LALPGMSGFVAELMVFVGFAT), 416–436 (IVVVLMGVGVILTPIYLLSML), and 462–482 (VFIIGCLLVPIIGIGFYPKLI).

It belongs to the complex I subunit 4 family.

It is found in the cellular thylakoid membrane. The enzyme catalyses a plastoquinone + NADH + (n+1) H(+)(in) = a plastoquinol + NAD(+) + n H(+)(out). The catalysed reaction is a plastoquinone + NADPH + (n+1) H(+)(in) = a plastoquinol + NADP(+) + n H(+)(out). NDH-1 shuttles electrons from NAD(P)H, via FMN and iron-sulfur (Fe-S) centers, to quinones in the respiratory chain. The immediate electron acceptor for the enzyme in this species is believed to be plastoquinone. Couples the redox reaction to proton translocation (for every two electrons transferred, four hydrogen ions are translocated across the cytoplasmic membrane), and thus conserves the redox energy in a proton gradient. In Synechocystis sp. (strain ATCC 27184 / PCC 6803 / Kazusa), this protein is NAD(P)H-quinone oxidoreductase chain 4-1 (ndhD1).